Here is an 88-residue protein sequence, read N- to C-terminus: Large ribosomal subunit protein bL27 (88 aa).

The interval 1–21 (MAHKKGASSSRNGRDSNAQRL) is disordered. The span at 7–19 (ASSSRNGRDSNAQ) shows a compositional bias: polar residues.

It belongs to the bacterial ribosomal protein bL27 family.

This is Large ribosomal subunit protein bL27 from Frankia casuarinae (strain DSM 45818 / CECT 9043 / HFP020203 / CcI3).